We begin with the raw amino-acid sequence, 385 residues long: Phosphate acyltransferase (385 aa).

Positions Met1–Pro17 are enriched in low complexity. A disordered region spans residues Met1 to Thr28.

Belongs to the PlsX family. As to quaternary structure, homodimer. Probably interacts with PlsY.

It is found in the cytoplasm. The enzyme catalyses a fatty acyl-[ACP] + phosphate = an acyl phosphate + holo-[ACP]. It participates in lipid metabolism; phospholipid metabolism. Functionally, catalyzes the reversible formation of acyl-phosphate (acyl-PO(4)) from acyl-[acyl-carrier-protein] (acyl-ACP). This enzyme utilizes acyl-ACP as fatty acyl donor, but not acyl-CoA. This chain is Phosphate acyltransferase, found in Dinoroseobacter shibae (strain DSM 16493 / NCIMB 14021 / DFL 12).